Reading from the N-terminus, the 371-residue chain is Leucine-rich repeat-containing protein 2 (371 aa).

9 LRR repeats span residues 122–143 (HLRE…IQLF), 145–166 (AMRI…IGCL), 168–189 (NLKE…LGDC), 191–214 (NLER…SNLK), 215–235 (QVTF…CVLR), 238–260 (NLQW…DRLE), 261–283 (ELQS…LNLK), 284–305 (KLTL…LCDS), and 308–329 (PLKF…DGNE).

The protein is Leucine-rich repeat-containing protein 2 (LRRC2) of Homo sapiens (Human).